A 264-amino-acid polypeptide reads, in one-letter code: Phosphonoacetaldehyde hydrolase (264 aa).

Residue D9 is the Nucleophile of the active site. Positions 9 and 11 each coordinate Mg(2+). The active-site Schiff-base intermediate with substrate is K50. D183 is a Mg(2+) binding site.

This sequence belongs to the HAD-like hydrolase superfamily. PhnX family. As to quaternary structure, homodimer. Mg(2+) is required as a cofactor.

The enzyme catalyses phosphonoacetaldehyde + H2O = acetaldehyde + phosphate + H(+). Its function is as follows. Involved in phosphonate degradation. The protein is Phosphonoacetaldehyde hydrolase (phnX) of Bacillus cereus.